The chain runs to 804 residues: Probable protein phosphatase 2C 18 (804 aa).

A helical transmembrane segment spans residues 19 to 39; it reads DASGPVLFWCVLIIFAVPDAI. The region spanning 129–434 is the PPM-type phosphatase domain; it reads KYIVSSMQGL…ENTTVILVQF (306 aa). Mn(2+) contacts are provided by Asp-165, Gly-166, Gln-384, and Glu-425. 4 disordered regions span residues 460–509, 564–599, 623–653, and 675–804; these read STSA…GGSA, DEVELDPNFRPKPQVRRAHDGPSPTPSEIEADLNAS, PLQGHDVSSTSTNPNTATDTGSGSRTGDDDV, and VDST…EGSP. Residues 468–499 show a composition bias toward low complexity; sequence GSDSDTSATSDEGVDDTATAGTTTTGYEAGSS. Over residues 628-637 the composition is skewed to polar residues; sequence DVSSTSTNPN. The span at 638-647 shows a compositional bias: low complexity; sequence TATDTGSGSR. The segment covering 713 to 734 has biased composition (polar residues); the sequence is LVNNDTTVADNNASGVADSTTV. The span at 776 to 789 shows a compositional bias: low complexity; it reads DATATATASASAAV. Acidic residues predominate over residues 790–804; that stretch reads ADDEGTAPDDSEGSP.

It belongs to the PP2C family. Requires Mg(2+) as cofactor. Mn(2+) serves as cofactor.

The protein resides in the membrane. It catalyses the reaction O-phospho-L-seryl-[protein] + H2O = L-seryl-[protein] + phosphate. The catalysed reaction is O-phospho-L-threonyl-[protein] + H2O = L-threonyl-[protein] + phosphate. The protein is Probable protein phosphatase 2C 18 of Oryza sativa subsp. japonica (Rice).